The chain runs to 465 residues: Histidine--tRNA ligase (465 aa).

The protein belongs to the class-II aminoacyl-tRNA synthetase family. As to quaternary structure, homodimer.

It localises to the cytoplasm. The enzyme catalyses tRNA(His) + L-histidine + ATP = L-histidyl-tRNA(His) + AMP + diphosphate + H(+). The protein is Histidine--tRNA ligase (hisS) of Pelagibacter ubique (strain HTCC1062).